The sequence spans 207 residues: Ankyrin repeat-containing protein P1E11.10 (207 aa).

ANK repeat units lie at residues 36–65 (NGYTPIHAAVSYGHSDLLKILVERGGDINI) and 69–98 (DGETPLFVCEKLEIAHDLINQYNADTTVKN).

It localises to the cytoplasm. Its subcellular location is the nucleus. This is Ankyrin repeat-containing protein P1E11.10 from Schizosaccharomyces pombe (strain 972 / ATCC 24843) (Fission yeast).